A 527-amino-acid polypeptide reads, in one-letter code: MSLCGTRANAKMMAAYNGGTSAAAAGHHHHHHHHLPHLPPPHLHHHHHPQHHLHPGSAAAVHPVQQHTSSAAAAAAAAAAAAAMLNPGQQQPYFPSPAPGQAPGPAAAAPAQVQAAAAATVKAHHHQHSHHPQQQLDIEPDRPIGYGAFGVVWSVTDPRDGKRVALKKMPNVFQNLVSCKRVFRELKMLCFFKHDNVLSALDILQPPHIDYFEEIYVVTELMQSDLHKIIVSPQPLSSDHVKVFLYQILRGLKYLHSAGILHRDIKPGNLLVNSNCVLKICDFGLARVEELDESRHMTQEVVTQYYRAPEILMGSRHYSNAIDIWSVGCIFAELLGRRILFQAQSPIQQLDLITDLLGTPSLEAMRTACEGAKAHILRGPHKQPSLPVLYTLSSQATHEAVHLLCRMLVFDPSKRISAKDALAHPYLDEGRLRYHTCMCKCCFSTSTGRVYTSDFEPVTNPKFDDTFEKNLSSVRQVKEIIHQFILEQQKGNRVPLCINPQSAAFKSFISSTVAQPSEMPPSPLVWE.

Sufficient for interaction with DAPK3 stretches follow at residues 1–125 (MSLC…KAHH) and 124–416 (HHHQ…SKRI). Required for interaction with TAB2 regions lie at residues 1 to 304 (MSLC…VVTQ) and 434 to 527 (YHTC…LVWE). Disordered stretches follow at residues 22–72 (AAAA…SSAA) and 90–139 (QQPY…LDIE). A compositionally biased stretch (basic residues) spans 26–54 (GHHHHHHHHLPHLPPPHLHHHHHPQHHLH). The segment covering 103–119 (PGPAAAAPAQVQAAAAA) has biased composition (low complexity). The span at 122-131 (KAHHHQHSHH) shows a compositional bias: basic residues. In terms of domain architecture, Protein kinase spans 138–427 (IEPDRPIGYG…AKDALAHPYL (290 aa)). ATP-binding positions include 144–152 (IGYGAFGVV) and lysine 167. Catalysis depends on aspartate 264, which acts as the Proton acceptor. The residue at position 298 (threonine 298) is a Phosphothreonine; by autocatalysis. A TQE motif is present at residues 298–300 (TQE). The tract at residues 428-527 (DEGRLRYHTC…EMPPSPLVWE (100 aa)) is required for homodimerization and kinase activation and localization to the nucleus. Residue serine 522 is modified to Phosphoserine.

The protein belongs to the protein kinase superfamily. CMGC Ser/Thr protein kinase family. MAP kinase subfamily. Homodimer. Homodimerization is required for intermolecular autophosphorylation, kinase activation and nuclear localization. Interacts with RNF138/NARF. Interacts with FOXO1 and FOXO3. Interacts with the upstream activating kinases HIPK2 and MAP3K7/TAK1. Interaction with MAP3K7/TAK1 seems to be indirect, and may be mediated by other proteins such as STAT3, TAB1 and TAB2. Interacts with and phosphorylates a number of transcription factors including FOXO4, LEF1, MYB, MYBL1, MYBL2, NOTCH1 and TCF7L2/TCF4. May interact with components of cullin-RING-based SCF (SKP1-CUL1-F-box protein) E3 ubiquitin-protein ligase complexes. Interacts with MEF2A. Interacts with ATF5; the interaction stabilizes ATF5 at the protein level in a kinase-independent manner. Mg(2+) is required as a cofactor. Post-translationally, phosphorylated on Thr-298. Intermolecular autophosphorylation on Thr-298 activates the enzyme. Expressed at high levels in the brain, and at lower levels in heart, kidney, lung and liver.

The protein localises to the nucleus. It localises to the cytoplasm. The enzyme catalyses L-seryl-[protein] + ATP = O-phospho-L-seryl-[protein] + ADP + H(+). It catalyses the reaction L-threonyl-[protein] + ATP = O-phospho-L-threonyl-[protein] + ADP + H(+). Its activity is regulated as follows. Activated by the non-canonical Wnt signaling pathway, in which WNT5A leads to activation of MAP3K7/TAK1 and HIPK2, which subsequently phosphorylates and activates this protein. Activated by dimerization and subsequent intermolecular autophosphorylation on Thr-298. Other cytokines such as IL6 may also activate this regulatory circuit. Serine/threonine-protein kinase that regulates a number of transcription factors with key roles in cell fate determination. Positive effector of the non-canonical Wnt signaling pathway, acting downstream of WNT5A, MAP3K7/TAK1 and HIPK2. Negative regulator of the canonical Wnt/beta-catenin signaling pathway. Binds to and phosphorylates TCF7L2/TCF4 and LEF1, promoting the dissociation of the TCF7L2/LEF1/beta-catenin complex from DNA, as well as the ubiquitination and subsequent proteolysis of LEF1. Together these effects inhibit the transcriptional activation of canonical Wnt/beta-catenin target genes. Negative regulator of the Notch signaling pathway. Binds to and phosphorylates NOTCH1, thereby preventing the formation of a transcriptionally active ternary complex of NOTCH1, RBPJ/RBPSUH and MAML1. Negative regulator of the MYB family of transcription factors. Phosphorylation of MYB leads to its subsequent proteolysis while phosphorylation of MYBL1 and MYBL2 inhibits their interaction with the coactivator CREBBP. Other transcription factors may also be inhibited by direct phosphorylation of CREBBP itself. Acts downstream of IL6 and MAP3K7/TAK1 to phosphorylate STAT3, which is in turn required for activation of NLK by MAP3K7/TAK1. Upon IL1B stimulus, cooperates with ATF5 to activate the transactivation activity of C/EBP subfamily members. Phosphorylates ATF5 but also stabilizes ATF5 protein levels in a kinase-independent manner. Acts as an inhibitor of the mTORC1 complex in response to osmotic stress by mediating phosphorylation of RPTOR, thereby preventing recruitment of the mTORC1 complex to lysosomes. The polypeptide is Serine/threonine-protein kinase NLK (Mus musculus (Mouse)).